An 809-amino-acid chain; its full sequence is Lon protease (809 aa).

The Lon N-terminal domain maps to 42–242 (LVIYPLGGRP…KVLTLLKKEL (201 aa)). 395–402 (GPPGVGKT) is a binding site for ATP. The region spanning 629-809 (LTGVGIVTGL…YAEVAKLVFG (181 aa)) is the Lon proteolytic domain. Catalysis depends on residues S716 and K759.

The protein belongs to the peptidase S16 family. Homohexamer. Organized in a ring with a central cavity.

It localises to the cytoplasm. It catalyses the reaction Hydrolysis of proteins in presence of ATP.. In terms of biological role, ATP-dependent serine protease that mediates the selective degradation of mutant and abnormal proteins as well as certain short-lived regulatory proteins. Required for cellular homeostasis and for survival from DNA damage and developmental changes induced by stress. Degrades polypeptides processively to yield small peptide fragments that are 5 to 10 amino acids long. Binds to DNA in a double-stranded, site-specific manner. This Magnetococcus marinus (strain ATCC BAA-1437 / JCM 17883 / MC-1) protein is Lon protease.